The following is a 346-amino-acid chain: Lipooligosaccharide heptosyltransferase 2 (346 aa).

It belongs to the glycosyltransferase 9 family.

The catalysed reaction is an L-alpha-D-Hep-(1-&gt;5)-[alpha-Kdo-(2-&gt;4)]-alpha-Kdo-(2-&gt;6)-lipid A + ADP-L-glycero-beta-D-manno-heptose = an L-alpha-D-Hep-(1-&gt;3)-L-alpha-D-Hep-(1-&gt;5)-[alpha-Kdo-(2-&gt;4)]-alpha-Kdo-(2-&gt;6)-lipid A + ADP + H(+). The protein operates within bacterial outer membrane biogenesis; LOS core biosynthesis. Functionally, glycosyltransferase involved in the biosynthesis of the core oligosaccharide region of lipooligosaccharide (LOS). Catalyzes the addition of a heptose unit to the heptosyl-Kdo2-lipid A module. In Haemophilus influenzae (strain ATCC 51907 / DSM 11121 / KW20 / Rd), this protein is Lipooligosaccharide heptosyltransferase 2 (waaF).